The following is a 301-amino-acid chain: Probable alpha-L-glutamate ligase 2 (301 aa).

In terms of domain architecture, ATP-grasp spans Leu104 to Glu287. Residues Lys141, Glu178–Tyr179, Asp187, and Arg211–Asn213 each bind ATP. 3 residues coordinate Mg(2+): Asp248, Glu260, and Asn262. 3 residues coordinate Mn(2+): Asp248, Glu260, and Asn262.

The protein belongs to the RimK family. Requires Mg(2+) as cofactor. It depends on Mn(2+) as a cofactor.

This chain is Probable alpha-L-glutamate ligase 2, found in Shewanella amazonensis (strain ATCC BAA-1098 / SB2B).